A 179-amino-acid chain; its full sequence is Replication restart protein DnaT (179 aa).

Residues 156–179 are disordered; sequence GGLPKRDVNTVSEPDSQIPPGFRG.

It belongs to the DnaT family. As to quaternary structure, homooligomerizes. Interacts with PriB. Component of the replication restart primosome. Primosome assembly occurs via a 'hand-off' mechanism. PriA binds to replication forks, subsequently PriB then DnaT bind; DnaT then displaces ssDNA to generate the helicase loading substrate.

Functionally, involved in the restart of stalled replication forks, which reloads the replicative helicase on sites other than the origin of replication. Can function in multiple replication restart pathways. Displaces ssDNA from a PriB-ssDNA complex. Probably forms a spiral filament on ssDNA. The sequence is that of Replication restart protein DnaT from Escherichia coli O81 (strain ED1a).